The primary structure comprises 206 residues: Small ribosomal subunit protein uS4 (206 aa).

The S4 RNA-binding domain maps to 96–156 (CRLDNVVYRM…EKSKNQLRIA (61 aa)).

The protein belongs to the universal ribosomal protein uS4 family. Part of the 30S ribosomal subunit. Contacts protein S5. The interaction surface between S4 and S5 is involved in control of translational fidelity.

Functionally, one of the primary rRNA binding proteins, it binds directly to 16S rRNA where it nucleates assembly of the body of the 30S subunit. With S5 and S12 plays an important role in translational accuracy. In Ectopseudomonas mendocina (strain ymp) (Pseudomonas mendocina), this protein is Small ribosomal subunit protein uS4.